Consider the following 73-residue polypeptide: uncharacterized protein (73 aa).

This is an uncharacterized protein from Thermoproteus tenax virus 1 (strain KRA1) (TTV1).